Consider the following 707-residue polypeptide: Choline transporter-like protein 4 (707 aa).

At 1–33 (MGGKQDQDKEAYGKPAKYDPSFRGPIRNRSCTD) the chain is on the cytoplasmic side. Residues 34–54 (IICCVLFFLFILGYIAVGILA) traverse the membrane as a helical segment. Residues 55 to 227 (WVYGDPKQVL…KIFEDFAQSW (173 aa)) are Extracellular-facing. N-linked (GlcNAc...) asparagine glycans are attached at residues N68, N185, and N196. A helical membrane pass occupies residues 228–248 (YWILIALGLALVLSLLFILLL). Topologically, residues 249 to 250 (RL) are cytoplasmic. Residues 251–271 (VAGPLVFVLIIGVLGVLAYGI) traverse the membrane as a helical segment. Topologically, residues 272 to 307 (YHCWEEYRVLRDKGASISQLGFTTNLSAYRNVQETW) are extracellular. N296 carries N-linked (GlcNAc...) asparagine glycosylation. The chain crosses the membrane as a helical span at residues 308–328 (LAALIILAVLEGVLLLMLIFL). The Cytoplasmic segment spans residues 329 to 356 (RQRICIAIALLKEASRAVGYIMSTMFYP). A helical transmembrane segment spans residues 357–377 (LVTFALLLVCIAYWAIIALFL). Over 378–452 (ATSGQPQYVF…AVLGLFWTIN (75 aa)) the chain is Extracellular. Residues N391, N403, and N413 are each glycosylated (N-linked (GlcNAc...) asparagine). A helical transmembrane segment spans residues 453 to 473 (WVLALGQCVLAGAFASFYWAF). Topologically, residues 474-498 (HKPRDIPTFPLGSAFLRTLRYHTGS) are cytoplasmic. The chain crosses the membrane as a helical span at residues 499 to 519 (LAFGALILTLVQIARVILEYI). Residues 520 to 557 (DHKLRGAQNPLTRCILCCFKCCLWCLEKFIKFLNRNAY) lie on the Extracellular side of the membrane. The helical transmembrane segment at 558-578 (IMIAIYGKNFCVSAKNAFMLL) threads the bilayer. The Cytoplasmic segment spans residues 579 to 594 (MRNIVRVVVLDKVTDL). The chain crosses the membrane as a helical span at residues 595–615 (LLFFGKLLVVGGVGVLSFFFF). Residues 616-635 (TGRIPSLGKTFENPQLNYYW) lie on the Extracellular side of the membrane. A helical membrane pass occupies residues 636–656 (LPIMVSILGAYLIASGFFSVF). Residues 657 to 707 (GMCVDTLFLCFLEDLERNDGSADRPYYMSKSLLKILGKKNKGTPGDKKRKK) lie on the Cytoplasmic side of the membrane.

It belongs to the CTL (choline transporter-like) family. Post-translationally, N-glycosylated; N-glycosylation of Asn-68 and Asn-391 is required for a proper thiamine pyrophosphate uptake.

Its subcellular location is the membrane. It is found in the apical cell membrane. It carries out the reaction choline(out) + n H(+)(in) = choline(in) + n H(+)(out). The catalysed reaction is thiamine diphosphate(out) = thiamine diphosphate(in). Functionally, choline transporter that plays a role in the choline-acetylcholine system and is required to the efferent innervation of hair cells in the olivocochlear bundle for the maintenance of physiological function of outer hair cells and the protection of hair cells from acoustic injury. Also described as a thiamine pyrophosphate transporter in colon, may mediate the absorption of microbiota-generated thiamine pyrophosphate and contribute to host thiamine (vitamin B1) homeostasis. The polypeptide is Choline transporter-like protein 4 (Bos taurus (Bovine)).